Reading from the N-terminus, the 112-residue chain is Small ribosomal subunit protein bS16 (112 aa).

This sequence belongs to the bacterial ribosomal protein bS16 family.

This is Small ribosomal subunit protein bS16 from Karelsulcia muelleri (strain GWSS) (Sulcia muelleri).